We begin with the raw amino-acid sequence, 478 residues long: Protein nucleotidyltransferase YdiU (478 aa).

ATP-binding residues include Gly84, Gly86, Arg87, Lys107, Asp119, Gly120, Arg170, and Arg177. Asp246 acts as the Proton acceptor in catalysis. Positions 247 and 256 each coordinate Mg(2+). Asp256 is a binding site for ATP.

This sequence belongs to the SELO family. Mg(2+) is required as a cofactor. The cofactor is Mn(2+).

The enzyme catalyses L-seryl-[protein] + ATP = 3-O-(5'-adenylyl)-L-seryl-[protein] + diphosphate. The catalysed reaction is L-threonyl-[protein] + ATP = 3-O-(5'-adenylyl)-L-threonyl-[protein] + diphosphate. It catalyses the reaction L-tyrosyl-[protein] + ATP = O-(5'-adenylyl)-L-tyrosyl-[protein] + diphosphate. It carries out the reaction L-histidyl-[protein] + UTP = N(tele)-(5'-uridylyl)-L-histidyl-[protein] + diphosphate. The enzyme catalyses L-seryl-[protein] + UTP = O-(5'-uridylyl)-L-seryl-[protein] + diphosphate. The catalysed reaction is L-tyrosyl-[protein] + UTP = O-(5'-uridylyl)-L-tyrosyl-[protein] + diphosphate. Its function is as follows. Nucleotidyltransferase involved in the post-translational modification of proteins. It can catalyze the addition of adenosine monophosphate (AMP) or uridine monophosphate (UMP) to a protein, resulting in modifications known as AMPylation and UMPylation. In Escherichia coli O7:K1 (strain IAI39 / ExPEC), this protein is Protein nucleotidyltransferase YdiU.